The chain runs to 435 residues: Putative pyridoxal-phosphate dependent protein F13B12.4 (435 aa).

The N-terminal stretch at 1–18 (MKLLLLALFLSISASCLA) is a signal peptide. N-linked (GlcNAc...) asparagine glycosylation occurs at Asn79. An N6-(pyridoxal phosphate)lysine modification is found at Lys89. Pyridoxal 5'-phosphate is bound at residue 235–239 (GTGGT). N-linked (GlcNAc...) asparagine glycosylation occurs at Asn277. Ser342 is a pyridoxal 5'-phosphate binding site.

Belongs to the cysteine synthase/cystathionine beta-synthase family. Highly divergent.

This Caenorhabditis elegans protein is Putative pyridoxal-phosphate dependent protein F13B12.4.